A 236-amino-acid chain; its full sequence is Heme oxygenase (236 aa).

His-17 contributes to the heme b binding site.

Belongs to the heme oxygenase family.

Its subcellular location is the plastid. It localises to the chloroplast. It carries out the reaction heme b + 3 reduced [NADPH--hemoprotein reductase] + 3 O2 = biliverdin IXalpha + CO + Fe(2+) + 3 oxidized [NADPH--hemoprotein reductase] + 3 H2O + H(+). Functionally, catalyzes the opening of the heme ring with the release of iron. Key enzyme in the synthesis of the chromophoric part of the photosynthetic antennae. The sequence is that of Heme oxygenase (pbsA) from Porphyra purpurea (Red seaweed).